Here is a 247-residue protein sequence, read N- to C-terminus: TM2 domain-containing protein 3 (247 aa).

A signal peptide spans 1 to 29 (MAGGVLPLRGLRALCRVLLFLSQFCILSG). At 30 to 179 (GEQSQALAQS…RTFPKMLYCN (150 aa)) the chain is on the extracellular side. N-linked (GlcNAc...) asparagine glycosylation is found at Asn-87, Asn-122, Asn-140, Asn-157, Asn-169, and Asn-179. Residues 180-200 (WTGGYKWSTALALSITLGGFG) form a helical membrane-spanning segment. One can recognise a TM2 domain in the interval 183–230 (GYKWSTALALSITLGGFGADRFYLGQWREGLGKLFSFGGLGIWTLIDV). Topologically, residues 201–215 (ADRFYLGQWREGLGK) are cytoplasmic. Residues 216 to 236 (LFSFGGLGIWTLIDVLLIGVG) traverse the membrane as a helical segment. At 237–247 (YVGPADGSLYI) the chain is on the extracellular side.

Belongs to the TM2 family. Widely expressed.

The protein localises to the membrane. Functionally, probable positive regulator of Notch signaling. This chain is TM2 domain-containing protein 3 (TM2D3), found in Homo sapiens (Human).